Here is a 163-residue protein sequence, read N- to C-terminus: Cyclic pyranopterin monophosphate synthase (163 aa).

Residues 75 to 77 (MCH) and 113 to 114 (ME) each bind substrate. Residue D128 is part of the active site.

It belongs to the MoaC family. In terms of assembly, homohexamer; trimer of dimers.

The enzyme catalyses (8S)-3',8-cyclo-7,8-dihydroguanosine 5'-triphosphate = cyclic pyranopterin phosphate + diphosphate. Its pathway is cofactor biosynthesis; molybdopterin biosynthesis. In terms of biological role, catalyzes the conversion of (8S)-3',8-cyclo-7,8-dihydroguanosine 5'-triphosphate to cyclic pyranopterin monophosphate (cPMP). The sequence is that of Cyclic pyranopterin monophosphate synthase from Desulforapulum autotrophicum (strain ATCC 43914 / DSM 3382 / VKM B-1955 / HRM2) (Desulfobacterium autotrophicum).